We begin with the raw amino-acid sequence, 1031 residues long: LRR receptor-like serine/threonine-protein kinase EFR (1031 aa).

An N-terminal signal peptide occupies residues 1-24; the sequence is MKLSFSLVFNALTLLLQVCIFAQA. At 25-653 the chain is on the extracellular side; sequence RFSNETDMQA…LSVRKKVVSG (629 aa). Asn28, Asn55, and Asn95 each carry an N-linked (GlcNAc...) asparagine glycan. 10 LRR repeats span residues 98-120, 122-144, 146-168, 170-193, 194-216, 218-240, 242-264, 267-289, 291-312, and 315-335; these read FLRLLNLADNSFGSTIPQKVGRL, RLQYLNMSYNLLEGRIPSSLSNC, RLSTVDLSSNHLGHGVPSELGSL, KLAILDLSKNNLTGNFPASLGNLT, SLQKLDFAYNQMRGEIPDEVARL, QMVFFQIALNSFSGGFPPALYNI, SLESLSLADNSFSGNLRADFGYL, NLRRLLLGTNQFTGAIPKTLANI, SLERFDISSNYLSGSIPLSFGK, and NLWWLGIRNNSLGNNSSSGLE. N-linked (GlcNAc...) asparagine glycans are attached at residues Asn127 and Asn143. 2 N-linked (GlcNAc...) asparagine glycosylation sites follow: Asn180 and Asn191. Residue Asn239 is glycosylated (N-linked (GlcNAc...) asparagine). An N-linked (GlcNAc...) asparagine glycan is attached at Asn288. N-linked (GlcNAc...) asparagine glycosylation is found at Asn323, Asn329, Asn342, and Asn366. LRR repeat units follow at residues 345–368, 370–392, 394–416, 418–440, 442–464, 466–487, 490–512, 514–536, 538–560, 561–584, and 585–597; these read QLEYLDVGYNRLGGELPASIANLS, TLTSLFLGQNLISGTIPHDIGNL, SLQELSLETNMLSGELPVSFGKL, NLQVVDLYSNAISGEIPSYFGNM, RLQKLHLNSNSFHGRIPQSLGRC, YLLDLWMDTNRLNGTIPQEILQ, SLAYIDLSNNFLTGHFPEEVGKL, LLVGLGASYNKLSGKMPQAIGGC, SMEFLFMQGNSFDGAIPDISRLV, SLKNVDFSNNNLSGRIPRYLASLP, and SLRNLNLSMNKFE. A glycan (N-linked (GlcNAc...) asparagine) is linked at Asn439. Asn478 is a glycosylation site (N-linked (GlcNAc...) asparagine). Asn571, Asn590, and Asn608 each carry an N-linked (GlcNAc...) asparagine glycan. A helical membrane pass occupies residues 654–674; that stretch reads ICIGIASLLLIIIVASLCWFM. Residues 675-1031 lie on the Cytoplasmic side of the membrane; that stretch reads KRKKKNNASD…WMLNTDMHTM (357 aa). A Phosphothreonine modification is found at Thr709. One can recognise a Protein kinase domain in the interval 712 to 1001; the sequence is FSSTNLIGSG…ELISIRSKFF (290 aa). Residues 718–726 and Lys741 each bind ATP; that span reads IGSGNFGNV. Residues Tyr791 and Tyr836 each carry the phosphotyrosine modification. Asp849 (proton acceptor) is an active-site residue. Tyr897 carries the phosphotyrosine modification. Polar residues predominate over residues 1005-1020; that stretch reads TTITESPRDAPQSSPQ. Positions 1005 to 1031 are disordered; sequence TTITESPRDAPQSSPQEWMLNTDMHTM.

Belongs to the protein kinase superfamily. Ser/Thr protein kinase family. In terms of assembly, binds to Pseudomonas syringae AvrPto1 and (via the kinase and cytoplasmic domains) to hopD2. Interacts with SERK3/BAK1, SERK4/BKK1, SERK1 and SERK2 in a specific ligand-induced manner. Binds to IOS1. Binds to BIK1 in the absence of pathogen elicitor; dissociates upon pathogen-associated molecular pattern (PAMP)-triggered activation. Autophosphorylated after elicitation with elfl18. Autophosphorylation is inhibited by the binding with avrPto1. Phosphorylation at T-836 is required for immune signaling. In terms of processing, polyubiquitinated at the kinase domain mediated by P.syringae AvrPtoB.

It localises to the cell membrane. The protein resides in the endomembrane system. It carries out the reaction L-seryl-[protein] + ATP = O-phospho-L-seryl-[protein] + ADP + H(+). It catalyses the reaction L-threonyl-[protein] + ATP = O-phospho-L-threonyl-[protein] + ADP + H(+). Its function is as follows. Constitutes the pattern-recognition receptor (PPR) that determines the specific perception of elongation factor Tu (EF-Tu), a potent elicitor of the defense response to pathogen-associated molecular patterns (PAMPs); phosphorylates BIK1 upon elicitation to regulate immune responses such as defense hormone expression (e.g. jasmonic acid (JA) and salicylic acid (SA)). Reduces transformation by Rhizobium radiobacter probably by inducing plant defense during the interaction. Binding to the effector AvrPto1 from P.syringae blocks the downstream plant immune response while interaction with hopD2 decreases the phosphorylation level of EFR upon elf18 treatment. Specific endoplasmic reticulum quality control components (ERD2B, CRT3, UGGT and STT3A) are required for the biogenesis of EFR. The protein is LRR receptor-like serine/threonine-protein kinase EFR of Arabidopsis thaliana (Mouse-ear cress).